The chain runs to 134 residues: Small ribosomal subunit protein uS8c (134 aa).

This sequence belongs to the universal ribosomal protein uS8 family. In terms of assembly, part of the 30S ribosomal subunit.

The protein localises to the plastid. The protein resides in the chloroplast. Its function is as follows. One of the primary rRNA binding proteins, it binds directly to 16S rRNA central domain where it helps coordinate assembly of the platform of the 30S subunit. This Draba nemorosa (Woodland whitlowgrass) protein is Small ribosomal subunit protein uS8c (rps8).